We begin with the raw amino-acid sequence, 360 residues long: Phospho-N-acetylmuramoyl-pentapeptide-transferase (360 aa).

10 consecutive transmembrane segments (helical) span residues leucine 19–phenylalanine 39, threonine 73–leucine 93, serine 95–aspartate 115, tyrosine 136–isoleucine 156, glycine 173–leucine 193, glycine 199–serine 219, isoleucine 233–phenylalanine 253, valine 263–valine 283, leucine 288–valine 308, and valine 338–lysine 358.

The protein belongs to the glycosyltransferase 4 family. MraY subfamily. Mg(2+) serves as cofactor.

It is found in the cell inner membrane. It carries out the reaction UDP-N-acetyl-alpha-D-muramoyl-L-alanyl-gamma-D-glutamyl-meso-2,6-diaminopimeloyl-D-alanyl-D-alanine + di-trans,octa-cis-undecaprenyl phosphate = di-trans,octa-cis-undecaprenyl diphospho-N-acetyl-alpha-D-muramoyl-L-alanyl-D-glutamyl-meso-2,6-diaminopimeloyl-D-alanyl-D-alanine + UMP. It functions in the pathway cell wall biogenesis; peptidoglycan biosynthesis. In terms of biological role, catalyzes the initial step of the lipid cycle reactions in the biosynthesis of the cell wall peptidoglycan: transfers peptidoglycan precursor phospho-MurNAc-pentapeptide from UDP-MurNAc-pentapeptide onto the lipid carrier undecaprenyl phosphate, yielding undecaprenyl-pyrophosphoryl-MurNAc-pentapeptide, known as lipid I. The sequence is that of Phospho-N-acetylmuramoyl-pentapeptide-transferase from Dichelobacter nodosus (strain VCS1703A).